Consider the following 180-residue polypeptide: ADP-ribosylation factor-like protein 1 (180 aa).

The N-myristoyl glycine moiety is linked to residue Gly2. GTP contacts are provided by residues 23 to 30 (GLDGAGKT), 66 to 70 (DLGGQ), and 125 to 128 (NKQD).

This sequence belongs to the small GTPase superfamily. Arf family.

Its function is as follows. GTP-binding protein involved in protein trafficking; may modulate vesicle budding and uncoating within the Golgi apparatus. In Drosophila melanogaster (Fruit fly), this protein is ADP-ribosylation factor-like protein 1 (Arl1).